Here is a 100-residue protein sequence, read N- to C-terminus: Urease subunit gamma (100 aa).

The protein belongs to the urease gamma subunit family. As to quaternary structure, heterotrimer of UreA (gamma), UreB (beta) and UreC (alpha) subunits. Three heterotrimers associate to form the active enzyme.

The protein localises to the cytoplasm. The enzyme catalyses urea + 2 H2O + H(+) = hydrogencarbonate + 2 NH4(+). It functions in the pathway nitrogen metabolism; urea degradation; CO(2) and NH(3) from urea (urease route): step 1/1. This chain is Urease subunit gamma, found in Limosilactobacillus fermentum (Lactobacillus fermentum).